A 350-amino-acid polypeptide reads, in one-letter code: Serine/arginine-rich splicing factor RS40 (350 aa).

RRM domains are found at residues 2–74 (KPVF…WTKS) and 97–168 (KTLF…YAVK). 2 stretches are compositionally biased toward basic and acidic residues: residues 73–82 (KSERGGDKRS) and 167–187 (VKDD…DRSP). Disordered stretches follow at residues 73–94 (KSER…SSMR) and 167–350 (VKDD…PADE). Phosphoserine occurs at positions 193, 195, and 211. Composition is skewed to basic and acidic residues over residues 216–227 (YRKERTSPDYGR) and 240–255 (GSPE…DSPR). Residues serine 241, serine 262, serine 278, serine 298, serine 308, serine 335, and serine 340 each carry the phosphoserine modification. Over residues 272–289 (NKRERMSPNHSPFKKESP) the composition is skewed to basic and acidic residues. Over residues 299–308 (PIERRERSRS) the composition is skewed to basic and acidic residues.

It belongs to the splicing factor SR family. RS subfamily. Component of the spliceosome. Interacts with SNRNP35. Interacts with CYP59. Interacts with RCF3 and CPL1. Interacts with DRB1/HYL1 and SE. As to expression, highly expressed in roots and flowers. A presumably longer alternatively spliced form is found in leaves, stems and flowers.

The protein localises to the nucleus. The protein resides in the nucleus speckle. Its function is as follows. Required for constitutive and alternative pre-mRNA splicing. Involved in primary miRNA processing and pri-miRNA biogenesis. Binds both intronless and intron-containing pri-miRNAs. The polypeptide is Serine/arginine-rich splicing factor RS40 (RS40) (Arabidopsis thaliana (Mouse-ear cress)).